A 991-amino-acid polypeptide reads, in one-letter code: Adhesion G-protein coupled receptor F3 (991 aa).

Residues 1–20 form the signal peptide; it reads MSSLALSQLLLAVTLPLLEL. The Extracellular portion of the chain corresponds to 21–694; sequence EPTFVPTAQS…ENPTLDLLSQ (674 aa). N75, N102, N118, N321, N362, N484, N571, N589, N630, and N660 each carry an N-linked (GlcNAc...) asparagine glycan. The 166-residue stretch at 519 to 684 folds into the GAIN-B domain; it reads HPFSFSSANV…SILMSQHTVP (166 aa). Intrachain disulfides connect C635–C666 and C654–C668. Residues 635–684 are GPS; sequence CVFWDHRVFQGQGGWSDEGCEVHAANASITQCICQHLTAFSILMSQHTVP. A helical transmembrane segment spans residues 695–715; that stretch reads VGTGASVLALLVCLAIYGLVW. The Cytoplasmic portion of the chain corresponds to 716–730; that stretch reads RVVVRNKVAFFRHTT. The helical transmembrane segment at 731–751 threads the bilayer; sequence LFNMVICLLVADTCFLGSPFL. Topologically, residues 752 to 757 are extracellular; sequence PSGYHS. Residues 758-778 traverse the membrane as a helical segment; it reads LICLVTAFLCHFFYLATFFWM. The Cytoplasmic segment spans residues 779 to 799; that stretch reads LAQALVLAHQLLFVFHQLSKH. Residues 800–820 traverse the membrane as a helical segment; the sequence is VVLSLMVMLGYLCPLGFAGVT. Residues 821-850 are Extracellular-facing; sequence LGLYLPQRKYLWEGKCFLNGGGVMLYSFSE. The helical transmembrane segment at 851–871 threads the bilayer; that stretch reads PVLAIVGVNGLVLVIAVLKLL. The Cytoplasmic portion of the chain corresponds to 872–892; the sequence is RPSLSEGPTVEKRQALVGVLK. The helical transmembrane segment at 893 to 913 threads the bilayer; sequence ALLILTPIFGLTWGLGVATLF. The Extracellular portion of the chain corresponds to 914–916; that stretch reads DGS. The chain crosses the membrane as a helical span at residues 917-937; it reads IVSHYAFSILNSLQGVFILVF. Residues 938 to 991 lie on the Cytoplasmic side of the membrane; sequence GCLTDKKVLEALRKRLRGSRSSNSAISMVTNETYTSEHSKERSEPASYEERMTD. The disordered stretch occupies residues 964-991; it reads SMVTNETYTSEHSKERSEPASYEERMTD. Residues 972-991 show a composition bias toward basic and acidic residues; it reads TSEHSKERSEPASYEERMTD.

This sequence belongs to the G-protein coupled receptor 2 family. Adhesion G-protein coupled receptor (ADGR) subfamily. As to quaternary structure, heterodimer of 2 chains generated by proteolytic processing; the large extracellular N-terminal fragment and the membrane-bound C-terminal fragment predominantly remain associated and non-covalently linked. In terms of processing, autoproteolytically processed at the GPS region of the GAIN-B domain; this cleavage modulates receptor activity. In terms of tissue distribution, expression is restricted to testis and circumvallate papillae.

Its subcellular location is the membrane. Orphan receptor. The protein is Adhesion G-protein coupled receptor F3 (ADGRF3) of Mus musculus (Mouse).